Here is a 498-residue protein sequence, read N- to C-terminus: Hyaluronan-mediated motility receptor (498 aa).

The interval 150–331 (EEMTSERNVF…ITDLQNQLRQ (182 aa)) is required for interaction with FAM83D. N-linked (GlcNAc...) asparagine glycosylation is found at asparagine 262 and asparagine 302. Hyaluronic acid-binding stretches follow at residues 420-430 (KQKIKHVVKLK) and 442-451 (KLRSQLAKRK). A glycan (N-linked (GlcNAc...) asparagine) is linked at asparagine 483. The residue at position 488 (threonine 488) is a Phosphothreonine.

As to quaternary structure, interacts with ANKRD26. Interacts with DYNLL1. Interacts with FAM83D/CHICA.

Its subcellular location is the cell surface. The protein resides in the cytoplasm. It localises to the cytoskeleton. The protein localises to the spindle. Receptor for hyaluronic acid (HA). Involved in cell motility. When hyaluronan binds to HMMR, the phosphorylation of a number of proteins, including the PTK2/FAK1 occurs. May also be involved in cellular transformation and metastasis formation, and in regulating extracellular-regulated kinase (ERK) activity. May act as a regulator of adipogenisis. This Rattus norvegicus (Rat) protein is Hyaluronan-mediated motility receptor (Hmmr).